The primary structure comprises 524 residues: MIQQALLSVSDKTGIVDFARALHGAGVKLLSTGGTAKLLAESGLPVTEVADYTGFPEMLDGRVKTLHPKVHGGILARRDLPEHMAALSQHGIPTIDLLVVNLYPFQQTVAKDECTLADAIENIDIGGPTMLRSAAKNHRDVTVIVDPADYATVLAEMQANGNTVGYDTNFMLAKKVFAHTAQYDGAITNYLTSLGQDKSHSTRSQYPQTLNLAFEQVQEMRYGENPHQSAAFYRDLKAVDGALANYAQLQGKELSYNNIADADAAWECVKSFDPAKGAACVIIKHANPCGVAIGGTAQEAYEKAFKTDSTSAFGGIIAFNVPLDEAAAQVVAKQFVEVLIAPSFSAGARTVFAAKQNVRLLEIPLGKGVNAYDFKRVGGGLLVQSPDAKNVQSAELRVVTKRHPTPKEMDDLLFAWRVAKFVKSNAIVFCGGGMTLGVGAGQMSRVDSARIASIKAQNAGLMLSGSAVASDAFFPFRDGLDVVVDAGASCVIQPGGSVRDDEVIAAADERNVAMIFTGTRHFRH.

The region spanning 1–145 (MIQQALLSVS…KNHRDVTVIV (145 aa)) is the MGS-like domain.

Belongs to the PurH family.

It catalyses the reaction (6R)-10-formyltetrahydrofolate + 5-amino-1-(5-phospho-beta-D-ribosyl)imidazole-4-carboxamide = 5-formamido-1-(5-phospho-D-ribosyl)imidazole-4-carboxamide + (6S)-5,6,7,8-tetrahydrofolate. The enzyme catalyses IMP + H2O = 5-formamido-1-(5-phospho-D-ribosyl)imidazole-4-carboxamide. It participates in purine metabolism; IMP biosynthesis via de novo pathway; 5-formamido-1-(5-phospho-D-ribosyl)imidazole-4-carboxamide from 5-amino-1-(5-phospho-D-ribosyl)imidazole-4-carboxamide (10-formyl THF route): step 1/1. The protein operates within purine metabolism; IMP biosynthesis via de novo pathway; IMP from 5-formamido-1-(5-phospho-D-ribosyl)imidazole-4-carboxamide: step 1/1. This chain is Bifunctional purine biosynthesis protein PurH, found in Ralstonia nicotianae (strain ATCC BAA-1114 / GMI1000) (Ralstonia solanacearum).